A 50-amino-acid polypeptide reads, in one-letter code: MPREIIQLQCGDCKDKNYSTTKNKKTTTGRLEFSKFCRKCRKHTSHKEVK.

This sequence belongs to the bacterial ribosomal protein bL33 family.

This chain is Large ribosomal subunit protein bL33, found in Koribacter versatilis (strain Ellin345).